The chain runs to 107 residues: Ornithine carbamoyltransferase, catabolic (107 aa).

Carbamoyl phosphate is bound by residues 57–61 (STRTR) and Gln-84.

The protein belongs to the aspartate/ornithine carbamoyltransferase superfamily. OTCase family.

Its subcellular location is the cytoplasm. The enzyme catalyses carbamoyl phosphate + L-ornithine = L-citrulline + phosphate + H(+). The protein operates within amino-acid degradation; L-arginine degradation via ADI pathway; carbamoyl phosphate from L-arginine: step 2/2. In Streptococcus pyogenes, this protein is Ornithine carbamoyltransferase, catabolic (arcB).